The primary structure comprises 198 residues: Chromophore lyase CpcT/CpeT 3 (198 aa).

Belongs to the CpcT/CpeT biliprotein lyase family.

In terms of biological role, covalently attaches a chromophore to Cys residue(s) of phycobiliproteins. This is Chromophore lyase CpcT/CpeT 3 from Synechococcus sp. (strain JA-3-3Ab) (Cyanobacteria bacterium Yellowstone A-Prime).